Consider the following 151-residue polypeptide: Macrodomain Ter protein (151 aa).

It belongs to the MatP family. Homodimer.

The protein localises to the cytoplasm. Functionally, required for spatial organization of the terminus region of the chromosome (Ter macrodomain) during the cell cycle. Prevents early segregation of duplicated Ter macrodomains during cell division. Binds specifically to matS, which is a 13 bp signature motif repeated within the Ter macrodomain. This is Macrodomain Ter protein from Photorhabdus laumondii subsp. laumondii (strain DSM 15139 / CIP 105565 / TT01) (Photorhabdus luminescens subsp. laumondii).